We begin with the raw amino-acid sequence, 460 residues long: Probable argininosuccinate lyase (460 aa).

3 residues coordinate 2-(N(omega)-L-arginino)succinate: Ser26, Asn114, and Thr159. His160 serves as the catalytic Proton acceptor. Ser281 serves as the catalytic Proton donor. 2-(N(omega)-L-arginino)succinate is bound by residues Asn289, Tyr321, Gln326, and Lys329.

It belongs to the lyase 1 family. Argininosuccinate lyase subfamily. As to quaternary structure, homotetramer.

The enzyme catalyses 2-(N(omega)-L-arginino)succinate = fumarate + L-arginine. The protein operates within amino-acid biosynthesis; L-arginine biosynthesis; L-arginine from L-ornithine and carbamoyl phosphate: step 3/3. This is Probable argininosuccinate lyase (argx) from Schizosaccharomyces pombe (strain 972 / ATCC 24843) (Fission yeast).